Reading from the N-terminus, the 322-residue chain is ATP-dependent 6-phosphofructokinase (322 aa).

Residue Gly13 coordinates ATP. 23–27 lines the ADP pocket; it reads RAVVR. Residues 74–75 and 104–107 each bind ATP; these read RC and GDGS. A Mg(2+)-binding site is contributed by Asp105. 127 to 129 contacts substrate; sequence TID. Asp129 (proton acceptor) is an active-site residue. Arg156 serves as a coordination point for ADP. Substrate contacts are provided by residues Arg164 and 171–173; that span reads MGR. ADP is bound by residues 187-189 and 215-217; these read GAE and KRH. Residues Glu224, Arg246, and 252–255 contribute to the substrate site; that span reads HIQR.

Belongs to the phosphofructokinase type A (PFKA) family. ATP-dependent PFK group I subfamily. Prokaryotic clade 'B1' sub-subfamily. In terms of assembly, homotetramer. Requires Mg(2+) as cofactor.

The protein localises to the cytoplasm. It catalyses the reaction beta-D-fructose 6-phosphate + ATP = beta-D-fructose 1,6-bisphosphate + ADP + H(+). Its pathway is carbohydrate degradation; glycolysis; D-glyceraldehyde 3-phosphate and glycerone phosphate from D-glucose: step 3/4. Allosterically activated by ADP and other diphosphonucleosides, and allosterically inhibited by phosphoenolpyruvate. Catalyzes the phosphorylation of D-fructose 6-phosphate to fructose 1,6-bisphosphate by ATP, the first committing step of glycolysis. The chain is ATP-dependent 6-phosphofructokinase from Paenibacillus macquariensis (Bacillus macquariensis).